The sequence spans 593 residues: Cysteine/serine-rich nuclear protein 1 (593 aa).

Disordered regions lie at residues 1 to 66 (MTGL…RDFC), 313 to 392 (FREL…GVDD), and 478 to 497 (REGSLPGTSVPPSMDAGQSS). Composition is skewed to low complexity over residues 17–46 (SSVSSSSSSSSSSSGCQSLSCSPSSSVSRA) and 351–372 (SCSSDMTDSSTASSSASGTSGA).

Belongs to the AXUD1 family.

The protein resides in the nucleus. Functionally, binds to the consensus sequence 5'-AGAGTG-3' and has transcriptional activator activity. May have a tumor-suppressor function. May play a role in apoptosis. The protein is Cysteine/serine-rich nuclear protein 1 (CSRNP1) of Pongo abelii (Sumatran orangutan).